The following is a 403-amino-acid chain: Sex hormone-binding globulin (403 aa).

The signal sequence occupies residues 1-30; it reads MEKGEVASLRCRLLLLLLLLTLPPTHQGRT. 2 consecutive Laminin G-like domains span residues 46-218 and 225-391; these read KYLS…LGNC and GLFF…THSC. Cysteines 194 and 218 form a disulfide. A glycan (N-linked (GlcNAc...) asparagine) is linked at N274. The cysteines at positions 363 and 391 are disulfide-linked. The N-linked (GlcNAc...) asparagine glycan is linked to N397.

As to quaternary structure, homodimer. In terms of tissue distribution, isoform 2 is only expressed in the liver.

It is found in the secreted. Its function is as follows. Functions as an androgen transport protein, but may also be involved in receptor mediated processes. Each dimer binds one molecule of steroid. Specific for 5-alpha-dihydrotestosterone, testosterone, and 17-beta-estradiol. Regulates the plasma metabolic clearance rate of steroid hormones by controlling their plasma concentration. This chain is Sex hormone-binding globulin (Shbg), found in Rattus norvegicus (Rat).